The following is a 509-amino-acid chain: CDK5RAP3 protein homolog (509 aa).

This sequence belongs to the CDK5RAP3 family.

It localises to the nucleus. The protein resides in the cytoplasm. Its function is as follows. Substrate adapter of E3 ligase complexes mediating ufmylation, the covalent attachment of the ubiquitin-like modifier UFM1 to substrate proteins, and which is involved in various processes, such as ribosome recycling and reticulophagy (also called ER-phagy). This is CDK5RAP3 protein homolog from Drosophila melanogaster (Fruit fly).